The sequence spans 920 residues: Alpha-L-rhamnosidase (920 aa).

Residues M1–S19 form the signal peptide. C20 carries the N-palmitoyl cysteine lipid modification. C20 carries S-diacylglycerol cysteine lipidation. Residues D500, R504–E506, D513, and W565 each bind alpha-L-rhamnose. The active-site Proton donor is E506. Catalysis depends on E779, which acts as the Proton acceptor. H800 lines the alpha-L-rhamnose pocket.

Belongs to the glycosyl hydrolase 78 family.

The protein localises to the cell membrane. The enzyme catalyses Hydrolysis of terminal non-reducing alpha-L-rhamnose residues in alpha-L-rhamnosides.. Functionally, alpha-L-rhamnosidase involved in ulvan degradation. Ulvan is the main polysaccharide component of the Ulvales (green seaweed) cell wall. It is composed of disaccharide building blocks comprising 3-sulfated rhamnose (Rha3S) linked to D-glucuronic acid (GlcA), L-iduronic acid (IduA), or D-xylose (Xyl). The enzyme is able to degrade p-nitrophenyl-alpha-L-rhamnopyranoside (PNP-Rha) in vitro. Incubating the enzyme with the products obtained after degradation with ulvan lyase and beta-glucuronyl hydrolase (i.e. the trisaccharides beta-alpha-L-Rha3S-IduA-Rha3S and beta-alpha-L-Rha3S-GlcA-Rha3S) showed no degradation, suggesting that the enzyme is active on neutral rhamnose and that desulfation of the oligosaccharide must be achieved before cleavage of rhamnose. The polypeptide is Alpha-L-rhamnosidase (Alteromonas sp. (strain LOR)).